A 341-amino-acid chain; its full sequence is MSSECARSDVHNVLTSDSMKFNHCFIISIIIISFFTTTKSVRVLLKQNLLPTCTRNLLFSAIINGIIHQCVTAVIRLRAFYHAIVYASDPCAILFQSSQCFFDGNLYYYTNLFSSFCCFSLFLDRLFSFKPRSSYHNHQTLASIVLILSQIVLPIGPLYWVFYDAFYTSYVLMCTYPPPMSVMKLHEVNNIRICVLIVLLFFAIFLYIHNKIREKRMVHNVYNINSRYKSYENYLATKSVCIVIFSQILCVGPTSSITSVFIRFRDSIPLEWFHLIISYLTGLTYSNFLLPLIILYQDKQIAKKRRIMIQRLQNKNETSFDHFDTLKSLWGKKTGNQETLF.

Transmembrane regions (helical) follow at residues 25-45, 57-77, 107-129, 142-162, 188-208, 242-262, and 275-295; these read FIISIIIISFFTTTKSVRVLL, LLFSAIINGIIHQCVTAVIRL, YYYTNLFSSFCCFSLFLDRLFSF, ASIVLILSQIVLPIGPLYWVF, VNNIRICVLIVLLFFAIFLYI, IVIFSQILCVGPTSSITSVFI, and LIISYLTGLTYSNFLLPLIIL.

The protein belongs to the nematode receptor-like protein sra family.

The protein localises to the membrane. The protein is Serpentine receptor class alpha-28 (sra-28) of Caenorhabditis elegans.